The following is a 131-amino-acid chain: Cystatin-like cysteine protease inhibitor EPIC3 (131 aa).

Residues 1 to 20 form the signal peptide; it reads MAFTRSIALFAGLALAASSA. N-linked (GlcNAc...) asparagine glycosylation is present at asparagine 33. The short motif at 71 to 75 is the Secondary area of contact element; that stretch reads QTVAG.

The protein belongs to the cystatin family.

The protein localises to the secreted. Its function is as follows. Secreted effector that interacts with and inhibits host apoplastic pathogenesis-related papain-like cysteine proteases. Inhibition of host proteases by a pathogen extracellular protease inhibitor forms a specific type of defense-counterdefense mechanism between plants and microbial pathogens. This is Cystatin-like cysteine protease inhibitor EPIC3 from Phytophthora infestans (Potato late blight agent).